Consider the following 872-residue polypeptide: Cadherin-1 (872 aa).

The N-terminal stretch at Met1–Ala25 is a signal peptide. Positions Glu26 to Arg148 are excised as a propeptide. Cadherin domains follow at residues Arg148 to Phe256, Thr257 to Phe370, Asp371 to Phe481, Leu482 to Leu589, and Val605 to Glu688. The Extracellular portion of the chain corresponds to Asp149–Ala701. The N-linked (GlcNAc...) asparagine glycan is linked to Asn209. Ca(2+)-binding residues include Asp251 and Asp282. Residues Asn456, Asn552, Asn631, and Asn669 are each glycosylated (N-linked (GlcNAc...) asparagine). A helical membrane pass occupies residues Ile702–Phe722. The Cytoplasmic segment spans residues Val723–Asp872. Residues Glu739–Asp758 form a disordered region. Residues Tyr747–Asp758 are compositionally biased toward acidic residues.

Homodimer. As to expression, abundantly expressed in intestine, stomach, liver, kidney, skin and eye. Also expressed in heart, lung, testis, ovary, muscle and brain.

It localises to the cell junction. It is found in the adherens junction. The protein localises to the cell membrane. Its subcellular location is the endosome. The protein resides in the golgi apparatus. It localises to the trans-Golgi network. It is found in the cytoplasm. The protein localises to the desmosome. In terms of biological role, cadherins are calcium-dependent cell adhesion proteins. They preferentially interact with themselves in a homophilic manner in connecting cells; cadherins may thus contribute to the sorting of heterogeneous cell types. Promotes organization of radial actin fiber structure and cellular response to contractile forces, via anchoring of radial actin fibers to CDH1 junction complexes at the cell membrane. E-cadherin is a ligand for integrin alpha-E/beta-7. The protein is Cadherin-1 (cdh1) of Xenopus laevis (African clawed frog).